Here is a 420-residue protein sequence, read N- to C-terminus: Mannose-1-phosphate guanylyltransferase regulatory subunit alpha (420 aa).

A substrate-binding domain region spans residues 2 to 251 (LKAVILIGGP…DGIWSQIKSA (250 aa)). Glu85 and Gln247 together coordinate GDP-alpha-D-mannose. Residues 273-420 (LAKHTPGGPR…SRSFTNQIIL (148 aa)) form a hexapeptide repeat domain region. Positions 356-384 (TPNDPNPNDPRARMDSESLFKDGKLLPAI) are C-loop.

Belongs to the transferase hexapeptide repeat family. In terms of assembly, component of the GMPPA-GMPPB mannose-1-phosphate guanylyltransferase complex composed of 4 GMPPA subunits and 8 GMPPB subunits; the complex is organized into three layers, a central layer made up of 2 GMPPA dimers sandwiched between two layers each made up of 2 GMPPB dimers.

The protein resides in the cytoplasm. Functionally, regulatory subunit of the GMPPA-GMPPB mannose-1-phosphate guanylyltransferase complex; reduces the catalytic activity of GMPPB when part of the complex. Mediates allosteric feedback inhibition of GMPPB catalytic activity upon binding GDP-alpha-D-mannose. Together with GMPPB regulates GDP-alpha-D-mannose levels. This is Mannose-1-phosphate guanylyltransferase regulatory subunit alpha (GMPPA) from Papio anubis (Olive baboon).